We begin with the raw amino-acid sequence, 450 residues long: Tubulin alpha-5 chain (450 aa).

Q11, E71, G144, T145, T179, N206, and N228 together coordinate GTP. E71 is a binding site for Mg(2+). E254 is a catalytic residue.

The protein belongs to the tubulin family. Dimer of alpha and beta chains. A typical microtubule is a hollow water-filled tube with an outer diameter of 25 nm and an inner diameter of 15 nM. Alpha-beta heterodimers associate head-to-tail to form protofilaments running lengthwise along the microtubule wall with the beta-tubulin subunit facing the microtubule plus end conferring a structural polarity. Microtubules usually have 13 protofilaments but different protofilament numbers can be found in some organisms and specialized cells. Mg(2+) is required as a cofactor. Post-translationally, undergoes a tyrosination/detyrosination cycle, the cyclic removal and re-addition of a C-terminal tyrosine residue by the enzymes tubulin tyrosine carboxypeptidase (TTCP) and tubulin tyrosine ligase (TTL), respectively.

It is found in the cytoplasm. It localises to the cytoskeleton. It carries out the reaction GTP + H2O = GDP + phosphate + H(+). Functionally, tubulin is the major constituent of microtubules, a cylinder consisting of laterally associated linear protofilaments composed of alpha- and beta-tubulin heterodimers. Microtubules grow by the addition of GTP-tubulin dimers to the microtubule end, where a stabilizing cap forms. Below the cap, tubulin dimers are in GDP-bound state, owing to GTPase activity of alpha-tubulin. The protein is Tubulin alpha-5 chain (TUBA5) of Zea mays (Maize).